The sequence spans 328 residues: DNA-directed RNA polymerase subunit alpha (328 aa).

The alpha N-terminal domain (alpha-NTD) stretch occupies residues Met-1–Glu-234. The interval Ile-248–Asp-328 is alpha C-terminal domain (alpha-CTD).

This sequence belongs to the RNA polymerase alpha chain family. Homodimer. The RNAP catalytic core consists of 2 alpha, 1 beta, 1 beta' and 1 omega subunit. When a sigma factor is associated with the core the holoenzyme is formed, which can initiate transcription.

The catalysed reaction is RNA(n) + a ribonucleoside 5'-triphosphate = RNA(n+1) + diphosphate. DNA-dependent RNA polymerase catalyzes the transcription of DNA into RNA using the four ribonucleoside triphosphates as substrates. This Cellvibrio japonicus (strain Ueda107) (Pseudomonas fluorescens subsp. cellulosa) protein is DNA-directed RNA polymerase subunit alpha.